The primary structure comprises 175 residues: Bifunctional protein PyrR (175 aa).

Residues 97–109 (IVLIDDVLFTGRT) carry the PRPP-binding motif.

Belongs to the purine/pyrimidine phosphoribosyltransferase family. PyrR subfamily. In terms of assembly, homodimer and homohexamer; in equilibrium.

The catalysed reaction is UMP + diphosphate = 5-phospho-alpha-D-ribose 1-diphosphate + uracil. Regulates transcriptional attenuation of the pyrimidine nucleotide (pyr) operon by binding in a uridine-dependent manner to specific sites on pyr mRNA. This disrupts an antiterminator hairpin in the RNA and favors formation of a downstream transcription terminator, leading to a reduced expression of downstream genes. In terms of biological role, also displays a weak uracil phosphoribosyltransferase activity which is not physiologically significant. The polypeptide is Bifunctional protein PyrR (Leuconostoc citreum (strain KM20)).